The following is a 138-amino-acid chain: Protein FAM136A (138 aa).

Ala-2 is subject to N-acetylalanine. Thr-124 and Thr-126 each carry phosphothreonine.

This sequence belongs to the FAM136 family.

The polypeptide is Protein FAM136A (Fam136a) (Mus musculus (Mouse)).